Here is a 118-residue protein sequence, read N- to C-terminus: uncharacterized protein (118 aa).

Residues A25–R85 are disordered. The segment covering R71–R83 has biased composition (low complexity).

This is an uncharacterized protein from Azospirillum brasilense.